The primary structure comprises 121 residues: Large ribosomal subunit protein uL24 (121 aa).

A disordered region spans residues 1 to 23 (MVRIESSQPRKQRKARYDAPSHM).

The protein belongs to the universal ribosomal protein uL24 family. Part of the 50S ribosomal subunit.

Functionally, one of two assembly initiator proteins, it binds directly to the 5'-end of the 23S rRNA, where it nucleates assembly of the 50S subunit. Located at the polypeptide exit tunnel on the outside of the subunit. This is Large ribosomal subunit protein uL24 from Methanoregula boonei (strain DSM 21154 / JCM 14090 / 6A8).